A 100-amino-acid polypeptide reads, in one-letter code: Aspartyl/glutamyl-tRNA(Asn/Gln) amidotransferase subunit C (100 aa).

Belongs to the GatC family. Heterotrimer of A, B and C subunits.

It carries out the reaction L-glutamyl-tRNA(Gln) + L-glutamine + ATP + H2O = L-glutaminyl-tRNA(Gln) + L-glutamate + ADP + phosphate + H(+). The catalysed reaction is L-aspartyl-tRNA(Asn) + L-glutamine + ATP + H2O = L-asparaginyl-tRNA(Asn) + L-glutamate + ADP + phosphate + 2 H(+). Allows the formation of correctly charged Asn-tRNA(Asn) or Gln-tRNA(Gln) through the transamidation of misacylated Asp-tRNA(Asn) or Glu-tRNA(Gln) in organisms which lack either or both of asparaginyl-tRNA or glutaminyl-tRNA synthetases. The reaction takes place in the presence of glutamine and ATP through an activated phospho-Asp-tRNA(Asn) or phospho-Glu-tRNA(Gln). This Streptococcus mutans serotype c (strain ATCC 700610 / UA159) protein is Aspartyl/glutamyl-tRNA(Asn/Gln) amidotransferase subunit C.